Here is a 456-residue protein sequence, read N- to C-terminus: Acyl-CoA transferase FPSE_08120 (456 aa).

The transit peptide at 1 to 33 (MARLLFSGQRLRPSFLRSYIRANPSSTPSATRA) directs the protein to the mitochondrion.

Belongs to the CoA-transferase III family.

The protein resides in the mitochondrion. Functionally, acyl-CoA transferase; part of the Fusarium detoxification of benzoxazolinone cluster involved in the degradation of benzoxazolinones produced by the host plant. Maize, wheat, and rye produce the 2 benzoxazinone phytoanticipins 2,4-dihy-droxy-7-methoxy-1,4-benzoxazin-3-one (DIMBOA) and 2,4-dihydroxy-1,4-benzoxazin-3-one (DIBOA) that, due to their inherent instability once released, spontaneously degrade to the more stable corresponding benzoxazolinones, 6-methoxy-2-benzoxazolinone (MBOA) and 2-benzoxazolinone (BOA), respectively. The first step in the detoxification of benzoxazolinones involves the hydrolysis of the cyclic ester bond of benzoxazolinones by the gamma-lactamase FDB1 to aminophenols. FDB1 is able to convert 2-benzoxazolinone (BOA) into 2-aminophenol (2-AP), as well as 6-methoxy-2-benzoxazolinone (MBOA) into 5-methoxy-2-aminophenol (2-AMP). The N-malonyltransferase FDB2 then metabolizes aminophenols via N-malonylation to non-toxic malonamic acids. FDB2 converts 2-AP into N-(2-hydroxyphenyl) malonamic acid (HPMA) and 2-AMP into N-(2-hydroxy-4-methoxyphenyl) malonamic acid (HMPMA). The cluster also contains 2 transcription factors (FDB3 and FPSE_08121), an aldo-keto reductase (FPSE_08125) that possibly associates with a ketone component of BOA and MBOA degradation, an esterase (FPSE_08126), an acyl-CoA transferase (FPSE_08120), a solute carrier protein (FPSE_08119) and a transmembrane transporter (FPSE_08127) proposed to shuttle metabolites of benzoxazolinone degradation. This Fusarium pseudograminearum (strain CS3096) (Wheat and barley crown-rot fungus) protein is Acyl-CoA transferase FPSE_08120.